The chain runs to 35 residues: Photosystem II reaction center protein T (35 aa).

The chain crosses the membrane as a helical span at residues 3-23 (ALVYTFLLVSTLGIIFFAIFF).

It belongs to the PsbT family. PSII is composed of 1 copy each of membrane proteins PsbA, PsbB, PsbC, PsbD, PsbE, PsbF, PsbH, PsbI, PsbJ, PsbK, PsbL, PsbM, PsbT, PsbY, PsbZ, Psb30/Ycf12, at least 3 peripheral proteins of the oxygen-evolving complex and a large number of cofactors. It forms dimeric complexes.

It is found in the plastid. It localises to the chloroplast thylakoid membrane. Its function is as follows. Found at the monomer-monomer interface of the photosystem II (PS II) dimer, plays a role in assembly and dimerization of PSII. PSII is a light-driven water plastoquinone oxidoreductase, using light energy to abstract electrons from H(2)O, generating a proton gradient subsequently used for ATP formation. The sequence is that of Photosystem II reaction center protein T from Bassia hyssopifolia (Fivehorn smotherweed).